An 82-amino-acid chain; its full sequence is Small ribosomal subunit protein uS17 (82 aa).

Belongs to the universal ribosomal protein uS17 family. In terms of assembly, part of the 30S ribosomal subunit.

In terms of biological role, one of the primary rRNA binding proteins, it binds specifically to the 5'-end of 16S ribosomal RNA. The protein is Small ribosomal subunit protein uS17 of Pelobacter propionicus (strain DSM 2379 / NBRC 103807 / OttBd1).